The following is an 827-amino-acid chain: Zinc phosphodiesterase ELAC protein 2 (827 aa).

The N-terminal 16 residues, 1 to 16 (MWALRSLLRPLGLRTM), are a transit peptide targeting the mitochondrion. Disordered regions lie at residues 15-46 (TMSQGSARRPRPPKDPLRHLRTREKRGPGWGP) and 181-220 (SERRCGEQEPSRSPKRSPNRLSPKQSSSDPGSAENGQCLP). The span at 181–192 (SERRCGEQEPSR) shows a compositional bias: basic and acidic residues. 6 positions are modified to phosphoserine: Ser193, Ser197, Ser202, Ser207, Ser617, and Ser735. The segment covering 199–210 (NRLSPKQSSSDP) has biased composition (polar residues). Residues 794-827 (LTQQADSSEDREPHQKRAHSEEPHSPQSKKVRAQ) form a disordered region. Thr795 is modified (phosphothreonine). Ser800 carries the post-translational modification Phosphoserine. Basic and acidic residues predominate over residues 801–817 (SEDREPHQKRAHSEEPH). A Phosphoserine modification is found at Ser818.

It belongs to the RNase Z family. As to quaternary structure, homodimer. Interacts with PTCD1. Zn(2+) serves as cofactor.

Its subcellular location is the mitochondrion. The protein localises to the mitochondrion matrix. It is found in the mitochondrion nucleoid. It localises to the nucleus. It carries out the reaction Endonucleolytic cleavage of RNA, removing extra 3' nucleotides from tRNA precursor, generating 3' termini of tRNAs. A 3'-hydroxy group is left at the tRNA terminus and a 5'-phosphoryl group is left at the trailer molecule.. Zinc phosphodiesterase, which displays mitochondrial tRNA 3'-processing endonuclease activity. Involved in tRNA maturation, by removing a 3'-trailer from precursor tRNA. Associates with mitochondrial DNA complexes at the nucleoids to initiate RNA processing and ribosome assembly. In Rattus norvegicus (Rat), this protein is Zinc phosphodiesterase ELAC protein 2 (Elac2).